The primary structure comprises 60 residues: Putative transmembrane protein 74 (60 aa).

Helical transmembrane passes span 4–24 and 35–55; these read FSVI…FLTF and WVYI…YQAG.

The protein resides in the host membrane. The sequence is that of Putative transmembrane protein 74 (SIFV0074) from Sulfolobus islandicus filamentous virus (isolate Iceland/Hveragerdi) (SIFV).